The following is a 743-amino-acid chain: Polyribonucleotide nucleotidyltransferase (743 aa).

Mg(2+)-binding residues include aspartate 489 and aspartate 495. One can recognise a KH domain in the interval 556–618 (PRIEKMHIGK…PCIDAAIGMI (63 aa)). Residues 628–698 (GETYPGKITS…KTGKFKLSRK (71 aa)) form the S1 motif domain. Residues 704–743 (PEGYVEPQPRERRERREGGREGGRNFERRGGDRDHREPRG) form a disordered region.

It belongs to the polyribonucleotide nucleotidyltransferase family. Requires Mg(2+) as cofactor.

The protein resides in the cytoplasm. The enzyme catalyses RNA(n+1) + phosphate = RNA(n) + a ribonucleoside 5'-diphosphate. Its function is as follows. Involved in mRNA degradation. Catalyzes the phosphorolysis of single-stranded polyribonucleotides processively in the 3'- to 5'-direction. The sequence is that of Polyribonucleotide nucleotidyltransferase from Porphyromonas gingivalis (strain ATCC BAA-308 / W83).